Here is a 792-residue protein sequence, read N- to C-terminus: Probable exo-1,4-beta-xylosidase xlnD (792 aa).

The signal sequence occupies residues 1–20 (MSVAKSIAAVLVALLPGALA). N-linked (GlcNAc...) asparagine glycosylation is found at Asn-23, Asn-87, Asn-118, Asn-142, and Asn-246. Asp-310 is a catalytic residue. 8 N-linked (GlcNAc...) asparagine glycosylation sites follow: Asn-326, Asn-385, Asn-404, Asn-440, Asn-477, Asn-518, Asn-679, and Asn-701.

This sequence belongs to the glycosyl hydrolase 3 family.

The protein localises to the secreted. The enzyme catalyses Hydrolysis of (1-&gt;4)-beta-D-xylans, to remove successive D-xylose residues from the non-reducing termini.. Its pathway is glycan degradation; xylan degradation. Xylan 1,4-beta-xylosidase involved in the hydrolysis of xylan, a major structural heterogeneous polysaccharide found in plant biomass representing the second most abundant polysaccharide in the biosphere, after cellulose. The sequence is that of Probable exo-1,4-beta-xylosidase xlnD (xlnD) from Aspergillus fumigatus (strain ATCC MYA-4609 / CBS 101355 / FGSC A1100 / Af293) (Neosartorya fumigata).